The chain runs to 60 residues: Putative mercuric resistance protein (60 aa).

The polypeptide is Putative mercuric resistance protein (Shigella flexneri).